The primary structure comprises 140 residues: Putative pre-16S rRNA nuclease (140 aa).

Belongs to the YqgF nuclease family.

It is found in the cytoplasm. Could be a nuclease involved in processing of the 5'-end of pre-16S rRNA. The protein is Putative pre-16S rRNA nuclease of Aeromonas hydrophila.